The chain runs to 702 residues: Polyribonucleotide nucleotidyltransferase (702 aa).

2 residues coordinate Mg(2+): Asp-487 and Asp-493. In terms of domain architecture, KH spans 554–613; sequence PRLLTIKIHPDKIREVIGKGGSTIQAITKETGTQIDIQDDGTIVIASVNAIAAQAAKARI. The S1 motif domain occupies 623–691; that stretch reads GRIYEGKVAK…KQGRIRLSMK (69 aa).

Belongs to the polyribonucleotide nucleotidyltransferase family. As to quaternary structure, component of the RNA degradosome, which is a multiprotein complex involved in RNA processing and mRNA degradation. Requires Mg(2+) as cofactor.

It localises to the cytoplasm. The enzyme catalyses RNA(n+1) + phosphate = RNA(n) + a ribonucleoside 5'-diphosphate. In terms of biological role, involved in mRNA degradation. Catalyzes the phosphorolysis of single-stranded polyribonucleotides processively in the 3'- to 5'-direction. This is Polyribonucleotide nucleotidyltransferase from Stenotrophomonas maltophilia (strain K279a).